We begin with the raw amino-acid sequence, 136 residues long: Protein NrdI (136 aa).

It belongs to the NrdI family.

Its function is as follows. Probably involved in ribonucleotide reductase function. The sequence is that of Protein NrdI from Enterobacter sp. (strain 638).